Here is a 174-residue protein sequence, read N- to C-terminus: Peptide deformylase (174 aa).

C96 and H138 together coordinate Fe cation. The active site involves E139. Position 142 (H142) interacts with Fe cation.

This sequence belongs to the polypeptide deformylase family. Requires Fe(2+) as cofactor.

It carries out the reaction N-terminal N-formyl-L-methionyl-[peptide] + H2O = N-terminal L-methionyl-[peptide] + formate. Functionally, removes the formyl group from the N-terminal Met of newly synthesized proteins. Requires at least a dipeptide for an efficient rate of reaction. N-terminal L-methionine is a prerequisite for activity but the enzyme has broad specificity at other positions. The chain is Peptide deformylase from Helicobacter pylori (strain J99 / ATCC 700824) (Campylobacter pylori J99).